The following is a 678-amino-acid chain: Probable antibacterial peptide polyprotein (678 aa).

14 tandem repeats follow at residues 1–67 (MRSP…PEVR), 68–114 (ERRS…PEVR), 115–161 (ERRS…PEVR), 162–208 (ERRS…PEVR), 209–255 (ERRS…PEVR), 256–302 (ERGS…PEVR), 303–349 (ERRS…PEVR), 350–396 (ERRS…PEVR), 397–443 (ERRS…PEVR), 444–490 (ERRS…PEVR), 491–537 (ERRS…PEVR), 538–584 (ERRS…PEVR), 585–631 (ERRS…PEVR), and 632–678 (ERRS…PEVR). Residues 1 to 678 (MRSPRVIHLA…SEGVVLPEVR (678 aa)) form a 14 X approximate tandem repeats region. O-linked (GalNAc...) threonine glycosylation is present at threonine 32. Disordered regions lie at residues 58–97 (SEAE…DASL) and 113–678 (VRER…PEVR). Residues 64-73 (PEVRERRSPV) are compositionally biased toward basic and acidic residues. O-linked (GalNAc...) threonine glycosylation is found at threonine 83 and threonine 130. Residues 145-157 (ESELSPLSEAEVL) show a composition bias toward low complexity. Residues 158-167 (PEVRERRSPV) are compositionally biased toward basic and acidic residues. Threonine 177 carries O-linked (GalNAc...) threonine glycosylation. Residues 188–204 (VASLESELSPLSEAEVL) are compositionally biased toward low complexity. The span at 205-214 (PEVRERRSPV) shows a compositional bias: basic and acidic residues. Threonine 224 and threonine 271 each carry an O-linked (GalNAc...) threonine glycan. Residues 299 to 308 (PEVRERRSPV) show a composition bias toward basic and acidic residues. Residue threonine 318 is glycosylated (O-linked (GalNAc...) threonine). The segment covering 333-345 (ESELSPLSEAEVL) has biased composition (low complexity). Over residues 346–355 (PEVRERRSPV) the composition is skewed to basic and acidic residues. The O-linked (GalNAc...) threonine glycan is linked to threonine 365. Low complexity predominate over residues 380-392 (ESELSPLSEAEVL). Basic and acidic residues predominate over residues 393–402 (PEVRERRSPV). An O-linked (GalNAc...) threonine glycan is attached at threonine 412. Residues 427-439 (ESELSPLSEAEVL) show a composition bias toward low complexity. The span at 440 to 449 (PEVRERRSPV) shows a compositional bias: basic and acidic residues. O-linked (GalNAc...) threonine glycosylation occurs at threonine 459. Residues 474–486 (ESELSPLSEAEVL) are compositionally biased toward low complexity. The segment covering 487–496 (PEVRERRSPV) has biased composition (basic and acidic residues). Threonine 506 carries O-linked (GalNAc...) threonine glycosylation. Positions 521-533 (ESELSPSSEAEVL) are enriched in low complexity. Over residues 534–543 (PEVRERRSPV) the composition is skewed to basic and acidic residues. Threonine 553 carries O-linked (GalNAc...) threonine glycosylation. The span at 568–580 (ESELSPLSEAEVL) shows a compositional bias: low complexity. The segment covering 581–590 (PEVRERRSPV) has biased composition (basic and acidic residues). O-linked (GalNAc...) threonine glycosylation occurs at threonine 600. Over residues 615-627 (ESELSPLSEAEGL) the composition is skewed to low complexity. An O-linked (GalNAc...) threonine glycan is attached at threonine 647.

The protein resides in the secreted. Its function is as follows. Has antibacterial activity in vitro. The protein is Probable antibacterial peptide polyprotein of Riptortus clavatus (Bean bug).